Reading from the N-terminus, the 225-residue chain is Pathogenesis-related 5 protein Jun a 3.0101 (225 aa).

The N-terminal stretch at 1 to 26 is a signal peptide; the sequence is MARVSELAFLLAATLAISLHMQEAGV. 8 cysteine pairs are disulfide-bonded: Cys35–Cys224, Cys76–Cys86, Cys91–Cys97, Cys139–Cys213, Cys144–Cys197, Cys152–Cys162, Cys166–Cys175, and Cys176–Cys184. IgE-binding stretches follow at residues 146-157, 158-170, and 178-191; these read ADINAVCPSELK, VDGG…NVFK, and NAYV…NYSK.

It belongs to the thaumatin family. Expressed in pollen (at protein level).

This chain is Pathogenesis-related 5 protein Jun a 3.0101, found in Juniperus ashei (Ozark white cedar).